Consider the following 243-residue polypeptide: Cytochrome c oxidase subunit 2 (243 aa).

Residues 1-34 (MNNIIHNDAPTPWGIYFQDGASPVYDGIVELHDQ) are Mitochondrial intermembrane-facing. A helical membrane pass occupies residues 35–55 (VLFYLLIVLVGVSWILFSTIL). Residues 56–74 (RFRGSGIVHKYHNHSTTIE) are Mitochondrial matrix-facing. Residues 75-97 (FVWTVSPALLLIAIAFPSFKLLY) form a helical membrane-spanning segment. Residues 98 to 243 (LMDEVIDPSI…EKFLSWLDNQ (146 aa)) lie on the Mitochondrial intermembrane side of the membrane. Cu cation-binding residues include H178, C213, E215, C217, H221, and M224. Residue E215 coordinates Mg(2+).

This sequence belongs to the cytochrome c oxidase subunit 2 family. As to quaternary structure, component of the cytochrome c oxidase (complex IV, CIV), a multisubunit enzyme composed of a catalytic core of 3 subunits and several supernumerary subunits. The complex exists as a monomer or a dimer and forms supercomplexes (SCs) in the inner mitochondrial membrane with ubiquinol-cytochrome c oxidoreductase (cytochrome b-c1 complex, complex III, CIII). Cu cation serves as cofactor.

It localises to the mitochondrion inner membrane. The enzyme catalyses 4 Fe(II)-[cytochrome c] + O2 + 8 H(+)(in) = 4 Fe(III)-[cytochrome c] + 2 H2O + 4 H(+)(out). Functionally, component of the cytochrome c oxidase, the last enzyme in the mitochondrial electron transport chain which drives oxidative phosphorylation. The respiratory chain contains 3 multisubunit complexes succinate dehydrogenase (complex II, CII), ubiquinol-cytochrome c oxidoreductase (cytochrome b-c1 complex, complex III, CIII) and cytochrome c oxidase (complex IV, CIV), that cooperate to transfer electrons derived from NADH and succinate to molecular oxygen, creating an electrochemical gradient over the inner membrane that drives transmembrane transport and the ATP synthase. Cytochrome c oxidase is the component of the respiratory chain that catalyzes the reduction of oxygen to water. Electrons originating from reduced cytochrome c in the intermembrane space (IMS) are transferred via the dinuclear copper A center (CU(A)) of subunit 2 and heme A of subunit 1 to the active site in subunit 1, a binuclear center (BNC) formed by heme A3 and copper B (CU(B)). The BNC reduces molecular oxygen to 2 water molecules using 4 electrons from cytochrome c in the IMS and 4 protons from the mitochondrial matrix. This Pneumocystis carinii protein is Cytochrome c oxidase subunit 2.